A 215-amino-acid chain; its full sequence is Octanoyltransferase (215 aa).

A BPL/LPL catalytic domain is found at proline 31–glutamate 206. Residues arginine 70–histidine 77, serine 137–glycine 139, and glycine 150–alanine 152 contribute to the substrate site. The Acyl-thioester intermediate role is filled by cysteine 168.

This sequence belongs to the LipB family.

It is found in the cytoplasm. It carries out the reaction octanoyl-[ACP] + L-lysyl-[protein] = N(6)-octanoyl-L-lysyl-[protein] + holo-[ACP] + H(+). Its pathway is protein modification; protein lipoylation via endogenous pathway; protein N(6)-(lipoyl)lysine from octanoyl-[acyl-carrier-protein]: step 1/2. Its function is as follows. Catalyzes the transfer of endogenously produced octanoic acid from octanoyl-acyl-carrier-protein onto the lipoyl domains of lipoate-dependent enzymes. Lipoyl-ACP can also act as a substrate although octanoyl-ACP is likely to be the physiological substrate. This is Octanoyltransferase from Pseudomonas entomophila (strain L48).